Here is a 450-residue protein sequence, read N- to C-terminus: Putative zinc metalloprotease PA3649 (450 aa).

Zn(2+) is bound at residue histidine 21. Glutamate 22 is a catalytic residue. Histidine 25 lines the Zn(2+) pocket. A helical transmembrane segment spans residues 97–119 (IAIVAAGPIANFLLAILFFWVVA). The region spanning 199–291 (GWLKGEDNPD…VLDVALELAV (93 aa)) is the PDZ domain. A helical transmembrane segment spans residues 425–444 (AWGMQIGISLVVGVMLLALV).

It belongs to the peptidase M50B family. The cofactor is Zn(2+).

The protein localises to the cell inner membrane. The polypeptide is Putative zinc metalloprotease PA3649 (Pseudomonas aeruginosa (strain ATCC 15692 / DSM 22644 / CIP 104116 / JCM 14847 / LMG 12228 / 1C / PRS 101 / PAO1)).